Reading from the N-terminus, the 122-residue chain is Large ribosomal subunit protein bL12 (122 aa).

The protein belongs to the bacterial ribosomal protein bL12 family. As to quaternary structure, homodimer. Part of the ribosomal stalk of the 50S ribosomal subunit. Forms a multimeric L10(L12)X complex, where L10 forms an elongated spine to which 2 to 4 L12 dimers bind in a sequential fashion. Binds GTP-bound translation factors.

Forms part of the ribosomal stalk which helps the ribosome interact with GTP-bound translation factors. Is thus essential for accurate translation. This is Large ribosomal subunit protein bL12 from Shewanella woodyi (strain ATCC 51908 / MS32).